The primary structure comprises 464 residues: ATP synthase subunit beta (464 aa).

Gly154 to Thr161 contributes to the ATP binding site.

The protein belongs to the ATPase alpha/beta chains family. F-type ATPases have 2 components, CF(1) - the catalytic core - and CF(0) - the membrane proton channel. CF(1) has five subunits: alpha(3), beta(3), gamma(1), delta(1), epsilon(1). CF(0) has three main subunits: a(1), b(2) and c(9-12). The alpha and beta chains form an alternating ring which encloses part of the gamma chain. CF(1) is attached to CF(0) by a central stalk formed by the gamma and epsilon chains, while a peripheral stalk is formed by the delta and b chains.

It localises to the cell inner membrane. It catalyses the reaction ATP + H2O + 4 H(+)(in) = ADP + phosphate + 5 H(+)(out). Functionally, produces ATP from ADP in the presence of a proton gradient across the membrane. The catalytic sites are hosted primarily by the beta subunits. The protein is ATP synthase subunit beta of Blochmanniella floridana.